A 296-amino-acid polypeptide reads, in one-letter code: Small ribosomal subunit biogenesis GTPase RsgA (296 aa).

The region spanning 65 to 226 (TNELIRPPIS…VADTPGFSSL (162 aa)) is the CP-type G domain. GTP-binding positions include 114-117 (TKMD) and 169-177 (GQSGVGKSS). Residues Cys250, Cys255, His257, and Cys263 each contribute to the Zn(2+) site.

Belongs to the TRAFAC class YlqF/YawG GTPase family. RsgA subfamily. In terms of assembly, monomer. Associates with 30S ribosomal subunit, binds 16S rRNA. It depends on Zn(2+) as a cofactor.

It is found in the cytoplasm. Its function is as follows. One of several proteins that assist in the late maturation steps of the functional core of the 30S ribosomal subunit. Helps release RbfA from mature subunits. May play a role in the assembly of ribosomal proteins into the subunit. Circularly permuted GTPase that catalyzes slow GTP hydrolysis, GTPase activity is stimulated by the 30S ribosomal subunit. The protein is Small ribosomal subunit biogenesis GTPase RsgA of Bacillus velezensis (strain DSM 23117 / BGSC 10A6 / LMG 26770 / FZB42) (Bacillus amyloliquefaciens subsp. plantarum).